Here is a 637-residue protein sequence, read N- to C-terminus: Biosynthetic arginine decarboxylase (637 aa).

K101 bears the N6-(pyridoxal phosphate)lysine mark. 286–296 (FDVGGGLAVDY) provides a ligand contact to substrate.

It belongs to the Orn/Lys/Arg decarboxylase class-II family. SpeA subfamily. Requires Mg(2+) as cofactor. Pyridoxal 5'-phosphate serves as cofactor.

It catalyses the reaction L-arginine + H(+) = agmatine + CO2. The protein operates within amine and polyamine biosynthesis; agmatine biosynthesis; agmatine from L-arginine: step 1/1. Its function is as follows. Catalyzes the biosynthesis of agmatine from arginine. The polypeptide is Biosynthetic arginine decarboxylase (Shewanella sediminis (strain HAW-EB3)).